The following is a 392-amino-acid chain: UDP-N-acetylglucosamine--N-acetylmuramyl-(pentapeptide) pyrophosphoryl-undecaprenol N-acetylglucosamine transferase (392 aa).

UDP-N-acetyl-alpha-D-glucosamine contacts are provided by residues 14–16, N124, R167, S195, I251, and Q296; that span reads TGG.

The protein belongs to the glycosyltransferase 28 family. MurG subfamily.

Its subcellular location is the cell inner membrane. The enzyme catalyses di-trans,octa-cis-undecaprenyl diphospho-N-acetyl-alpha-D-muramoyl-L-alanyl-D-glutamyl-meso-2,6-diaminopimeloyl-D-alanyl-D-alanine + UDP-N-acetyl-alpha-D-glucosamine = di-trans,octa-cis-undecaprenyl diphospho-[N-acetyl-alpha-D-glucosaminyl-(1-&gt;4)]-N-acetyl-alpha-D-muramoyl-L-alanyl-D-glutamyl-meso-2,6-diaminopimeloyl-D-alanyl-D-alanine + UDP + H(+). Its pathway is cell wall biogenesis; peptidoglycan biosynthesis. Its function is as follows. Cell wall formation. Catalyzes the transfer of a GlcNAc subunit on undecaprenyl-pyrophosphoryl-MurNAc-pentapeptide (lipid intermediate I) to form undecaprenyl-pyrophosphoryl-MurNAc-(pentapeptide)GlcNAc (lipid intermediate II). The protein is UDP-N-acetylglucosamine--N-acetylmuramyl-(pentapeptide) pyrophosphoryl-undecaprenol N-acetylglucosamine transferase of Sphingopyxis alaskensis (strain DSM 13593 / LMG 18877 / RB2256) (Sphingomonas alaskensis).